A 227-amino-acid polypeptide reads, in one-letter code: 2,3-bisphosphoglycerate-dependent phosphoglycerate mutase (227 aa).

Substrate contacts are provided by residues 8–15, 21–22, Arg58, 110–113, Lys121, 137–138, and 181–182; these read RHGKSVWN, TG, ERMY, RR, and GN. His9 functions as the Tele-phosphohistidine intermediate in the catalytic mechanism. The Proton donor/acceptor role is filled by Glu110.

This sequence belongs to the phosphoglycerate mutase family. BPG-dependent PGAM subfamily.

The catalysed reaction is (2R)-2-phosphoglycerate = (2R)-3-phosphoglycerate. It participates in carbohydrate degradation; glycolysis; pyruvate from D-glyceraldehyde 3-phosphate: step 3/5. Catalyzes the interconversion of 2-phosphoglycerate and 3-phosphoglycerate. The polypeptide is 2,3-bisphosphoglycerate-dependent phosphoglycerate mutase (Chlamydia caviae (strain ATCC VR-813 / DSM 19441 / 03DC25 / GPIC) (Chlamydophila caviae)).